Consider the following 139-residue polypeptide: Putative pre-16S rRNA nuclease (139 aa).

It belongs to the YqgF nuclease family.

It localises to the cytoplasm. Its function is as follows. Could be a nuclease involved in processing of the 5'-end of pre-16S rRNA. This Rippkaea orientalis (strain PCC 8801 / RF-1) (Cyanothece sp. (strain PCC 8801)) protein is Putative pre-16S rRNA nuclease.